The following is a 260-amino-acid chain: Dehydrogenase/reductase SDR family member 11 (260 aa).

The N-terminal stretch at 1–30 is a signal peptide; the sequence is MARPGMERWRDRLALVTGASGGIGAAVARA. Residues 18 to 23, 43 to 44, E49, 70 to 71, and N97 each bind NADP(+); these read GASGGI, RT, and DL. Residues S151 and Y166 each contribute to the substrate site. Residues Y166, K170, 201 to 204, and K208 contribute to the NADP(+) site; that span reads VETQ. The active-site Proton acceptor is Y166.

The protein belongs to the short-chain dehydrogenases/reductases (SDR) family. In terms of assembly, homotetramer. Isoform 1: Ubiquitously expressed, with highest levels in testis, small intestine, colon, kidney, brain and heart. Isoform 3: Expressed in brain, heart and skeletal muscle.

The protein localises to the secreted. The catalysed reaction is a 3beta-hydroxysteroid + NADP(+) = a 3-oxosteroid + NADPH + H(+). It catalyses the reaction 17beta-estradiol + NAD(+) = estrone + NADH + H(+). The enzyme catalyses 17beta-estradiol + NADP(+) = estrone + NADPH + H(+). It functions in the pathway steroid biosynthesis; estrogen biosynthesis. Its activity is regulated as follows. Inhibited by flavonoids including apigenin, luteolin, genistein, kaempferol and quercetin and also by carbenoxolone, zearalenone, glycyrrhetinic, curcumin and flufenamic acid. Catalyzes the conversion of the 17-keto group of estrone, 4- and 5-androstenes and 5-alpha-androstanes into their 17-beta-hydroxyl metabolites and the conversion of the 3-keto group of 3-, 3,17- and 3,20- diketosteroids into their 3-hydroxyl metabolites. Exhibits reductive 3-beta-hydroxysteroid dehydrogenase activity toward 5-beta-androstanes, 5-beta-pregnanes, 4-pregnenes and bile acids. May also reduce endogenous and exogenous alpha-dicarbonyl compounds and xenobiotic alicyclic ketones. The protein is Dehydrogenase/reductase SDR family member 11 (DHRS11) of Homo sapiens (Human).